Reading from the N-terminus, the 91-residue chain is RNA-binding protein Hfq (91 aa).

Residues Asp9–Val68 enclose the Sm domain. Positions Val68–Glu91 are disordered.

Belongs to the Hfq family. Homohexamer.

In terms of biological role, RNA chaperone that binds small regulatory RNA (sRNAs) and mRNAs to facilitate mRNA translational regulation in response to envelope stress, environmental stress and changes in metabolite concentrations. Also binds with high specificity to tRNAs. The chain is RNA-binding protein Hfq from Haemophilus influenzae (strain 86-028NP).